Consider the following 436-residue polypeptide: Methylenetetrahydrofolate--tRNA-(uracil-5-)-methyltransferase TrmFO (436 aa).

7–12 (GAGLAG) is a binding site for FAD.

Belongs to the MnmG family. TrmFO subfamily. Requires FAD as cofactor.

It is found in the cytoplasm. It catalyses the reaction uridine(54) in tRNA + (6R)-5,10-methylene-5,6,7,8-tetrahydrofolate + NADH + H(+) = 5-methyluridine(54) in tRNA + (6S)-5,6,7,8-tetrahydrofolate + NAD(+). The enzyme catalyses uridine(54) in tRNA + (6R)-5,10-methylene-5,6,7,8-tetrahydrofolate + NADPH + H(+) = 5-methyluridine(54) in tRNA + (6S)-5,6,7,8-tetrahydrofolate + NADP(+). Its function is as follows. Catalyzes the folate-dependent formation of 5-methyl-uridine at position 54 (M-5-U54) in all tRNAs. In Caldicellulosiruptor bescii (strain ATCC BAA-1888 / DSM 6725 / KCTC 15123 / Z-1320) (Anaerocellum thermophilum), this protein is Methylenetetrahydrofolate--tRNA-(uracil-5-)-methyltransferase TrmFO.